A 130-amino-acid chain; its full sequence is Small ribosomal subunit protein uS8 (130 aa).

It belongs to the universal ribosomal protein uS8 family. As to quaternary structure, part of the 30S ribosomal subunit. Contacts proteins S5 and S12.

Its function is as follows. One of the primary rRNA binding proteins, it binds directly to 16S rRNA central domain where it helps coordinate assembly of the platform of the 30S subunit. In Actinobacillus pleuropneumoniae serotype 5b (strain L20), this protein is Small ribosomal subunit protein uS8.